The primary structure comprises 396 residues: Phosphopentomutase (396 aa).

Mn(2+)-binding residues include Asp-13, Asp-288, His-293, Asp-329, His-330, and His-341.

It belongs to the phosphopentomutase family. It depends on Mn(2+) as a cofactor.

The protein resides in the cytoplasm. It catalyses the reaction 2-deoxy-alpha-D-ribose 1-phosphate = 2-deoxy-D-ribose 5-phosphate. The enzyme catalyses alpha-D-ribose 1-phosphate = D-ribose 5-phosphate. It participates in carbohydrate degradation; 2-deoxy-D-ribose 1-phosphate degradation; D-glyceraldehyde 3-phosphate and acetaldehyde from 2-deoxy-alpha-D-ribose 1-phosphate: step 1/2. Its function is as follows. Isomerase that catalyzes the conversion of deoxy-ribose 1-phosphate (dRib-1-P) and ribose 1-phosphate (Rib-1-P) to deoxy-ribose 5-phosphate (dRib-5-P) and ribose 5-phosphate (Rib-5-P), respectively. The chain is Phosphopentomutase from Clostridium perfringens (strain ATCC 13124 / DSM 756 / JCM 1290 / NCIMB 6125 / NCTC 8237 / Type A).